A 354-amino-acid chain; its full sequence is Uroporphyrinogen decarboxylase (354 aa).

Substrate is bound by residues 27-31, aspartate 77, tyrosine 154, threonine 209, and histidine 327; that span reads RQAGR.

This sequence belongs to the uroporphyrinogen decarboxylase family. As to quaternary structure, homodimer.

The protein resides in the cytoplasm. It catalyses the reaction uroporphyrinogen III + 4 H(+) = coproporphyrinogen III + 4 CO2. Its pathway is porphyrin-containing compound metabolism; protoporphyrin-IX biosynthesis; coproporphyrinogen-III from 5-aminolevulinate: step 4/4. Functionally, catalyzes the decarboxylation of four acetate groups of uroporphyrinogen-III to yield coproporphyrinogen-III. The polypeptide is Uroporphyrinogen decarboxylase (Klebsiella pneumoniae (strain 342)).